Consider the following 257-residue polypeptide: Protein CUSTOS (257 aa).

The segment covering 1–11 (MSDLESSSSSS) has biased composition (low complexity). The disordered stretch occupies residues 1–72 (MSDLESSSSS…HEQDGNELQT (72 aa)). The span at 32 to 41 (QRPRGPEKPG) shows a compositional bias: basic and acidic residues. Residue S55 is modified to Phosphoserine. A Phosphothreonine modification is found at T73. Disordered regions lie at residues 120–157 (FTSIPGGPEKEAAPQPCRKRLPSSSSSDDGDEELRRCR) and 170–257 (SAIH…VPSN). Basic residues-rich tracts occupy residues 180–190 (KKKKRKLKKKA) and 227–237 (TKKKKRKKKTK). The short motif at 228–236 (KKKKRKKKT) is the Nucleolar localization signal (NLS) element.

Belongs to the CUSTOS family.

The protein resides in the nucleus envelope. Plays a role in the regulation of Wnt signaling pathway during early development. This is Protein CUSTOS from Bos taurus (Bovine).